We begin with the raw amino-acid sequence, 222 residues long: Phosphoribosylformylglycinamidine synthase subunit PurQ (222 aa).

The Glutamine amidotransferase type-1 domain occupies Ala3–Val222. Cys86 (nucleophile) is an active-site residue. Active-site residues include His194 and Glu196.

As to quaternary structure, part of the FGAM synthase complex composed of 1 PurL, 1 PurQ and 2 PurS subunits.

Its subcellular location is the cytoplasm. The catalysed reaction is N(2)-formyl-N(1)-(5-phospho-beta-D-ribosyl)glycinamide + L-glutamine + ATP + H2O = 2-formamido-N(1)-(5-O-phospho-beta-D-ribosyl)acetamidine + L-glutamate + ADP + phosphate + H(+). The enzyme catalyses L-glutamine + H2O = L-glutamate + NH4(+). Its pathway is purine metabolism; IMP biosynthesis via de novo pathway; 5-amino-1-(5-phospho-D-ribosyl)imidazole from N(2)-formyl-N(1)-(5-phospho-D-ribosyl)glycinamide: step 1/2. Part of the phosphoribosylformylglycinamidine synthase complex involved in the purines biosynthetic pathway. Catalyzes the ATP-dependent conversion of formylglycinamide ribonucleotide (FGAR) and glutamine to yield formylglycinamidine ribonucleotide (FGAM) and glutamate. The FGAM synthase complex is composed of three subunits. PurQ produces an ammonia molecule by converting glutamine to glutamate. PurL transfers the ammonia molecule to FGAR to form FGAM in an ATP-dependent manner. PurS interacts with PurQ and PurL and is thought to assist in the transfer of the ammonia molecule from PurQ to PurL. The chain is Phosphoribosylformylglycinamidine synthase subunit PurQ from Roseobacter denitrificans (strain ATCC 33942 / OCh 114) (Erythrobacter sp. (strain OCh 114)).